The sequence spans 275 residues: MLKIENLTKRYKGDEIALKGVSLEIKKGQVVGLIGPSGAGKSTLIRCINRLIEPSSGEVWLEGVNLPSLSRTKLKEARREMGMIFQEYALIERLSVMENVLSGRLGYHSFWRTFWRRFPEAEVERAFYYLERVGLIEHYNKRADQLSGGQRQRVGIARALAQEPKVLLVDEPTASLDPKTSRQVMRLLLELCREKELLAIVNIHDVPLAQAFMERIVGLRAGEVVFDGAPSELDERALTEIYGEEEWKTLQKTHQEESSLGEDSSLLYAKAEIAG.

An ABC transporter domain is found at 2-246; it reads LKIENLTKRY…ALTEIYGEEE (245 aa). 35-42 lines the ATP pocket; that stretch reads GPSGAGKS.

Belongs to the ABC transporter superfamily. Phosphonates importer (TC 3.A.1.9.1) family. The complex is composed of two ATP-binding proteins (PhnC), two transmembrane proteins (PhnE) and a solute-binding protein (PhnD).

Its subcellular location is the cell inner membrane. The enzyme catalyses phosphonate(out) + ATP + H2O = phosphonate(in) + ADP + phosphate + H(+). Functionally, part of the ABC transporter complex PhnCDE involved in phosphonates import. Responsible for energy coupling to the transport system. The polypeptide is Phosphonates import ATP-binding protein PhnC (Wolinella succinogenes (strain ATCC 29543 / DSM 1740 / CCUG 13145 / JCM 31913 / LMG 7466 / NCTC 11488 / FDC 602W) (Vibrio succinogenes)).